We begin with the raw amino-acid sequence, 408 residues long: Exo-alpha-sialidase ARB_03431 (408 aa).

An N-terminal signal peptide occupies residues 1–22 (MGIKQWLLSLVVVAISATATQA). Substrate-binding residues include arginine 62, arginine 81, aspartate 87, and glutamine 150. The N-linked (GlcNAc...) asparagine glycan is linked to asparagine 237. Substrate-binding positions include arginine 267, arginine 324, 324 to 325 (RT), 333 to 334 (YD), lysine 339, tyrosine 360, aspartate 378, and 378 to 380 (DWY). A glycan (N-linked (GlcNAc...) asparagine) is linked at asparagine 398.

This sequence belongs to the glycosyl hydrolase 33 family.

Its subcellular location is the secreted. The enzyme catalyses Hydrolysis of alpha-(2-&gt;3)-, alpha-(2-&gt;6)-, alpha-(2-&gt;8)- glycosidic linkages of terminal sialic acid residues in oligosaccharides, glycoproteins, glycolipids, colominic acid and synthetic substrates.. In terms of biological role, sialidase is able to release sialic acid from a wide variety of natural substrates. The chain is Exo-alpha-sialidase ARB_03431 from Arthroderma benhamiae (strain ATCC MYA-4681 / CBS 112371) (Trichophyton mentagrophytes).